We begin with the raw amino-acid sequence, 584 residues long: AAA ATPase forming ring-shaped complexes (584 aa).

Residues 10 to 96 (AQSGTEHAEQ…LKENLDAVTH (87 aa)) adopt a coiled-coil conformation. The interval 40–66 (HQLQSAQRHAAGLSERRRAAEAQTQTA) is disordered. Position 292-297 (292-297 (GTGKTM)) interacts with ATP.

Belongs to the AAA ATPase family. Homohexamer. Assembles into a hexameric ring structure.

This Micrococcus luteus (strain ATCC 4698 / DSM 20030 / JCM 1464 / CCM 169 / CCUG 5858 / IAM 1056 / NBRC 3333 / NCIMB 9278 / NCTC 2665 / VKM Ac-2230) (Micrococcus lysodeikticus) protein is AAA ATPase forming ring-shaped complexes.